The following is a 237-amino-acid chain: UPF0502 protein RB6530 (237 aa).

The segment covering Ala187–Pro202 has biased composition (polar residues). Residues Ala187–Ile211 form a disordered region.

This sequence belongs to the UPF0502 family.

The chain is UPF0502 protein RB6530 from Rhodopirellula baltica (strain DSM 10527 / NCIMB 13988 / SH1).